We begin with the raw amino-acid sequence, 119 residues long: MPRVKRGVTAKARHKKILKLAKGYRGRRKNVYRIAKQAVMKAGQYAYRDRRQRKRQFRTLWIARINAAARELGMTYSTFMNGIRKAGISLDRKILADLAVFDKVAFEKITNQVKAGLAN.

This sequence belongs to the bacterial ribosomal protein bL20 family.

In terms of biological role, binds directly to 23S ribosomal RNA and is necessary for the in vitro assembly process of the 50S ribosomal subunit. It is not involved in the protein synthesizing functions of that subunit. In Nitrosomonas europaea (strain ATCC 19718 / CIP 103999 / KCTC 2705 / NBRC 14298), this protein is Large ribosomal subunit protein bL20.